Reading from the N-terminus, the 575-residue chain is SH2B adapter protein 3 (575 aa).

Disordered regions lie at residues 1–23, 83–136, and 150–176; these read MNGPALQPSSPSSAPSASPAAAP, RAPG…CSFQ, and SAGELPAAHTAAAPGTPGEAAETPARP. A Phosphoserine modification is found at Ser13. Positions 83-93 are enriched in basic and acidic residues; the sequence is RAPGRDYRDTG. Low complexity predominate over residues 95 to 104; that stretch reads GPPAKAEASP. Ser103, Ser120, and Ser150 each carry phosphoserine. The span at 152–174 shows a compositional bias: low complexity; sequence GELPAAHTAAAPGTPGEAAETPA. In terms of domain architecture, PH spans 194–307; that stretch reads EALKEAVLRY…WMAELSECTG (114 aa). The interval 322–346 is disordered; it reads ALEPSTSSSPRGSTDSLNQGASPGG. A compositionally biased stretch (low complexity) spans 325–337; the sequence is PSTSSSPRGSTDS. At Ser330 the chain carries Phosphoserine. Residues 364–462 form the SH2 domain; sequence WFHGPISRVK…ACDVRLSSYV (99 aa). 2 disordered regions span residues 503-525 and 546-575; these read SSGCPRGLSPEGLPGRSSPPEQI and PVNRARDSDYEMDSSSRSHLRAIDNQYTPL.

Belongs to the SH2B adapter family. In terms of assembly, binds to the tyrosine-phosphorylated TCR zeta chain via its SH2 domain. Post-translationally, tyrosine phosphorylated by LCK. As to expression, preferentially expressed by lymphoid cell lines.

Links T-cell receptor activation signal to phospholipase C-gamma-1, GRB2 and phosphatidylinositol 3-kinase. The protein is SH2B adapter protein 3 (SH2B3) of Homo sapiens (Human).